Consider the following 159-residue polypeptide: Eukaryotic translation initiation factor 5A-2 (159 aa).

Over residues 1 to 10 the composition is skewed to basic and acidic residues; that stretch reads MSDDEHHFEA. A disordered region spans residues 1–25; it reads MSDDEHHFEASESGASKTYPQSAGN. Position 2 is a phosphoserine (Ser2). Over residues 13 to 24 the composition is skewed to polar residues; it reads SGASKTYPQSAG. Lys51 carries the post-translational modification Hypusine.

The protein belongs to the eIF-5A family. In terms of assembly, homodimer. Interacts with AHK4 and AHP1. Cytokinin regulates the formation of the AHP1-AHK4-ELF5A-2 complex. Lys-51 undergoes hypusination, a unique post-translational modification that consists in the addition of a butylamino group from spermidine to lysine side chain, leading to the formation of the unusual amino acid hypusine. eIF-5As are the only known proteins to undergo this modification, which is essential for their function. In terms of tissue distribution, ubiquitous. In roots, expressed mostly inside the stele of the mature zone.

It localises to the cytoplasm. The protein localises to the nucleus. Translation factor that promotes translation elongation and termination, particularly upon ribosome stalling at specific amino acid sequence contexts. Binds between the exit (E) and peptidyl (P) site of the ribosome and promotes rescue of stalled ribosome: specifically required for efficient translation of polyproline-containing peptides as well as other motifs that stall the ribosome. Acts as a ribosome quality control (RQC) cofactor by joining the RQC complex to facilitate peptidyl transfer during CAT tailing step. Regulates cytokinin-mediated root protoxylem specification and represses secifically the expression of AHP6. Regulates the induction of programmed cell death caused by infection with virulent pathogen. The sequence is that of Eukaryotic translation initiation factor 5A-2 (ELF5A-2) from Arabidopsis thaliana (Mouse-ear cress).